We begin with the raw amino-acid sequence, 87 residues long: Neurotoxin Cex1 (87 aa).

The N-terminal stretch at 1–19 is a signal peptide; sequence MNSLLMITTCLVLFGTVWA. The LCN-type CS-alpha/beta domain occupies 20-85; the sequence is KEGYLVSKST…TYPIPGKSCG (66 aa). 4 disulfide bridges follow: Cys-31–Cys-84, Cys-35–Cys-60, Cys-44–Cys-65, and Cys-48–Cys-67. A Cysteine amide modification is found at Cys-84. The propeptide occupies 85–87; it reads GKK.

The protein belongs to the long (4 C-C) scorpion toxin superfamily. Sodium channel inhibitor family. Beta subfamily. Expressed by the venom gland.

It localises to the secreted. Its function is as follows. Beta toxins bind voltage-independently at site-4 of sodium channels (Nav) and shift the voltage of activation toward more negative potentials thereby affecting sodium channel activation and promoting spontaneous and repetitive firing. This chain is Neurotoxin Cex1, found in Centruroides exilicauda (Bark scorpion).